The sequence spans 452 residues: Imidazoleglycerol-phosphate dehydratase (452 aa).

Positions 1–233 (MASPVQALLL…VGASVVLTPG (233 aa)) are unknown activity. The imidazoleglycerol-phosphate dehydratase stretch occupies residues 234–452 (LGELLDLVPA…GVPSTKGVLA (219 aa)).

It belongs to the imidazoleglycerol-phosphate dehydratase family.

The catalysed reaction is D-erythro-1-(imidazol-4-yl)glycerol 3-phosphate = 3-(imidazol-4-yl)-2-oxopropyl phosphate + H2O. Its pathway is amino-acid biosynthesis; L-histidine biosynthesis; L-histidine from 5-phospho-alpha-D-ribose 1-diphosphate: step 6/9. The sequence is that of Imidazoleglycerol-phosphate dehydratase (HIS3) from Phytophthora nicotianae (Potato buckeye rot agent).